A 434-amino-acid polypeptide reads, in one-letter code: Gamma-enolase (434 aa).

At Ser-2 the chain carries N-acetylserine. An N6-acetyllysine modification is found at Lys-5. Thr-26 bears the Phosphothreonine mark. Residue Ser-40 participates in Mg(2+) binding. At Tyr-44 the chain carries Phosphotyrosine. Lys-60 bears the N6-acetyllysine; alternate mark. Lys-60 is subject to N6-succinyllysine; alternate. Lys-64 carries the N6-acetyllysine modification. An N6-acetyllysine; alternate modification is found at Lys-89. Lys-89 is modified (N6-succinyllysine; alternate). Residues His-158 and Glu-167 each contribute to the substrate site. An N6-acetyllysine mark is found at Lys-193, Lys-197, and Lys-199. Lys-202 is subject to N6-acetyllysine; alternate. Lys-202 participates in a covalent cross-link: Glycyl lysine isopeptide (Lys-Gly) (interchain with G-Cter in SUMO2); alternate. Residue Glu-210 is the Proton donor of the active site. N6-acetyllysine; alternate occurs at positions 228 and 233. N6-succinyllysine; alternate is present on Lys-228. An N6-(2-hydroxyisobutyryl)lysine; alternate modification is found at Lys-233. Mg(2+) is bound at residue Asp-245. Lys-256 is subject to N6-acetyllysine. Residue Ser-263 is modified to Phosphoserine. Position 287 is a phosphotyrosine (Tyr-287). Ser-291 is subject to Phosphoserine. Glu-293 and Asp-318 together coordinate Mg(2+). Substrate is bound by residues Glu-293 and Asp-318. 2 positions are modified to N6-acetyllysine: Lys-335 and Lys-343. Lys-343 (proton acceptor) is an active-site residue. Substrate contacts are provided by residues 370–373 and Lys-394; that span reads SHRS. At Lys-406 the chain carries N6-acetyllysine.

Belongs to the enolase family. In terms of assembly, mammalian enolase is composed of 3 isozyme subunits, alpha, beta and gamma, which can form homodimers or heterodimers which are cell-type and development-specific. The cofactor is Mg(2+). As to expression, skeletal muscle (at protein level). The alpha/alpha homodimer is expressed in embryo and in most adult tissues. The alpha/beta heterodimer and the beta/beta homodimer are found in striated muscle, and the alpha/gamma heterodimer and the gamma/gamma homodimer in neurons.

It localises to the cytoplasm. It is found in the cell membrane. The enzyme catalyses (2R)-2-phosphoglycerate = phosphoenolpyruvate + H2O. It functions in the pathway carbohydrate degradation; glycolysis; pyruvate from D-glyceraldehyde 3-phosphate: step 4/5. Functionally, has neurotrophic and neuroprotective properties on a broad spectrum of central nervous system (CNS) neurons. Binds, in a calcium-dependent manner, to cultured neocortical neurons and promotes cell survival. In Mus musculus (Mouse), this protein is Gamma-enolase (Eno2).